The sequence spans 332 residues: Protein pelota homolog (332 aa).

Belongs to the eukaryotic release factor 1 family. Pelota subfamily. As to quaternary structure, monomer. Requires a divalent metal cation as cofactor.

Its subcellular location is the cytoplasm. Its function is as follows. May function in recognizing stalled ribosomes, interact with stem-loop structures in stalled mRNA molecules, and effect endonucleolytic cleavage of the mRNA. May play a role in the release non-functional ribosomes and degradation of damaged mRNAs. Has endoribonuclease activity. The polypeptide is Protein pelota homolog (Pyrobaculum aerophilum (strain ATCC 51768 / DSM 7523 / JCM 9630 / CIP 104966 / NBRC 100827 / IM2)).